A 341-amino-acid polypeptide reads, in one-letter code: Trimethylamine N-oxide transport system ATP-binding protein TmoW (341 aa).

Residues 6-265 (IKCESVYKIF…PATEYVRKFT (260 aa)) form the ABC transporter domain. 61 to 68 (GLSGSGKS) contributes to the ATP binding site.

It belongs to the ABC transporter superfamily. The complex is probably composed of two ATP-binding proteins (TmoW), two transmembrane proteins (TmoV) and a solute-binding protein (TmoX).

It is found in the cell inner membrane. The catalysed reaction is a quaternary ammonium(out) + ATP + H2O = a quaternary ammonium(in) + ADP + phosphate + H(+). Functionally, part of the ABC transporter complex TmoXWV involved in trimethylamine N-oxide (TMAO) import. Responsible for energy coupling to the transport system. The protein is Trimethylamine N-oxide transport system ATP-binding protein TmoW of Pelagibacter ubique (strain HTCC1062).